We begin with the raw amino-acid sequence, 205 residues long: Probable calcium-binding protein CML41 (205 aa).

The tract at residues 26-55 (SFQNRRRSPKSNSSSTLNSPRSNSDDNNNI) is disordered. A compositionally biased stretch (low complexity) spans 35 to 54 (KSNSSSTLNSPRSNSDDNNN). EF-hand domains are found at residues 60 to 95 (ASKE…VGEY), 96 to 131 (ISHE…RDLY), 137 to 173 (DGDG…LGES), and 174 to 205 (RTYG…MMTV). The Ca(2+) site is built by Asp73, Asp75, Asp77, Lys79, Glu84, Asp109, Asp111, Asp113, Ser115, and Asp120. Positions 187, 189, 191, and 198 each coordinate Ca(2+).

Functionally, potential calcium sensor. This is Probable calcium-binding protein CML41 (CML41) from Arabidopsis thaliana (Mouse-ear cress).